We begin with the raw amino-acid sequence, 143 residues long: Hemoglobin subunit alpha (143 aa).

In terms of domain architecture, Globin spans 3-143; sequence KLSGEDKANV…TMRLCISKYR (141 aa). Histidine 60 lines the O2 pocket. Histidine 89 serves as a coordination point for heme b.

This sequence belongs to the globin family. As to quaternary structure, heterotetramer of two alpha chains and two beta chains. Red blood cells.

Functionally, involved in oxygen transport from the lung to the various peripheral tissues. In Ambystoma mexicanum (Axolotl), this protein is Hemoglobin subunit alpha (HBA).